Reading from the N-terminus, the 368-residue chain is Probable endopolygalacturonase I (368 aa).

An N-terminal signal peptide occupies residues 1–18 (MRSVEILGLAALGSLVAA). A propeptide spanning residues 19–31 (APSPSRVSNSAKK) is cleaved from the precursor. Cysteine 35 and cysteine 50 are joined by a disulfide. 2 PbH1 repeats span residues 162 to 192 (ATNL…DIGE) and 193 to 214 (SNGV…AINS). Catalysis depends on aspartate 207, which acts as the Proton donor. Residues cysteine 209 and cysteine 225 are joined by a disulfide bond. The active site involves histidine 229. PbH1 repeat units lie at residues 244–265 (VKNV…RIKT), 273–295 (VGDV…VIEQ), and 307–328 (TTGV…ASNA). Asparagine 246 carries N-linked (GlcNAc...) asparagine glycosylation. Intrachain disulfides connect cysteine 335-cysteine 340 and cysteine 359-cysteine 368.

The protein belongs to the glycosyl hydrolase 28 family.

It is found in the secreted. The enzyme catalyses (1,4-alpha-D-galacturonosyl)n+m + H2O = (1,4-alpha-D-galacturonosyl)n + (1,4-alpha-D-galacturonosyl)m.. Its function is as follows. Involved in maceration and soft-rotting of plant tissue. Hydrolyzes the 1,4-alpha glycosidic bonds of de-esterified pectate in the smooth region of the plant cell wall. This Aspergillus clavatus (strain ATCC 1007 / CBS 513.65 / DSM 816 / NCTC 3887 / NRRL 1 / QM 1276 / 107) protein is Probable endopolygalacturonase I (pgaI).